The primary structure comprises 601 residues: Serine/threonine-protein phosphatase 2A 65 kDa regulatory subunit A beta isoform (601 aa).

Alanine 2 is subject to N-acetylalanine. HEAT repeat units follow at residues 20–58, 59–96, 97–135, 136–173, 174–212, 213–251, 252–290, 291–333, 334–372, 373–411, 412–450, 451–489, 490–528, 529–567, and 568–601; these read DSLY…GVER, TRTE…GGPD, FAHC…TPVA, LEAH…ASNA, VKAE…ELDS, VKTE…SQED, LEAL…GPKI, ALSD…RETV, IMNQ…GKEN, TIEH…GIRQ, LSQS…GVEF, FDEK…GTEW, AQNT…GKEI, TTKQ…DTNA, and LQGE…LALA.

It belongs to the phosphatase 2A regulatory subunit A family. As to quaternary structure, PP2A consists of a common heterodimeric core enzyme, composed of a 36 kDa catalytic subunit (subunit C) and a 65 kDa constant regulatory subunit (PR65 or subunit A), that associates with a variety of regulatory subunits. Proteins that associate with the core dimer include three families of regulatory subunits B (the R2/B/PR55/B55, R3/B''/PR72/PR130/PR59 and R5/B'/B56 families), the 48 kDa variable regulatory subunit, viral proteins, and cell signaling molecules. Interacts with IPO9. Interacts with SGO1. Interacts with RAF1.

Its function is as follows. The PR65 subunit of protein phosphatase 2A serves as a scaffolding molecule to coordinate the assembly of the catalytic subunit and a variable regulatory B subunit. This Mus musculus (Mouse) protein is Serine/threonine-protein phosphatase 2A 65 kDa regulatory subunit A beta isoform (Ppp2r1b).